The following is a 573-amino-acid chain: ESX-1 secretion system protein EccA1 (573 aa).

334–341 (GPPGTGKT) is a binding site for ATP.

Belongs to the CbxX/CfxQ family. In terms of assembly, part of the ESX-1 / type VII secretion system (T7SS), which is composed of cytosolic and membrane components.

The protein resides in the cytoplasm. Functionally, part of the ESX-1 specialized secretion system, which delivers several virulence factors to host cells during infection, including the key virulence factors EsxA (ESAT-6) and EsxB (CFP-10). EccA1 exhibits ATPase activity and may provide energy for the export of ESX-1 substrates. This Mycobacterium tuberculosis (strain CDC 1551 / Oshkosh) protein is ESX-1 secretion system protein EccA1.